Reading from the N-terminus, the 466-residue chain is Ribulose bisphosphate carboxylase large chain (466 aa).

Position 5 is an N6,N6,N6-trimethyllysine (lysine 5). The substrate site is built by asparagine 114 and threonine 164. Lysine 166 serves as the catalytic Proton acceptor. Position 168 (lysine 168) interacts with substrate. The Mg(2+) site is built by lysine 192, aspartate 194, and glutamate 195. Lysine 192 carries the post-translational modification N6-carboxylysine. Catalysis depends on histidine 285, which acts as the Proton acceptor. Residues arginine 286, histidine 318, and serine 370 each coordinate substrate.

It belongs to the RuBisCO large chain family. Type I subfamily. In terms of assembly, heterohexadecamer of 8 large chains and 8 small chains; disulfide-linked. The disulfide link is formed within the large subunit homodimers. Mg(2+) serves as cofactor. The disulfide bond which can form in the large chain dimeric partners within the hexadecamer appears to be associated with oxidative stress and protein turnover.

It localises to the plastid. The protein resides in the chloroplast. The enzyme catalyses 2 (2R)-3-phosphoglycerate + 2 H(+) = D-ribulose 1,5-bisphosphate + CO2 + H2O. It catalyses the reaction D-ribulose 1,5-bisphosphate + O2 = 2-phosphoglycolate + (2R)-3-phosphoglycerate + 2 H(+). Functionally, ruBisCO catalyzes two reactions: the carboxylation of D-ribulose 1,5-bisphosphate, the primary event in carbon dioxide fixation, as well as the oxidative fragmentation of the pentose substrate in the photorespiration process. Both reactions occur simultaneously and in competition at the same active site. In Thespesia populnea (Portia tree), this protein is Ribulose bisphosphate carboxylase large chain.